Here is a 316-residue protein sequence, read N- to C-terminus: Probable 5-dehydro-4-deoxyglucarate dehydratase 1 (316 aa).

The protein belongs to the DapA family.

It catalyses the reaction 5-dehydro-4-deoxy-D-glucarate + H(+) = 2,5-dioxopentanoate + CO2 + H2O. The protein operates within carbohydrate acid metabolism; D-glucarate degradation; 2,5-dioxopentanoate from D-glucarate: step 2/2. The sequence is that of Probable 5-dehydro-4-deoxyglucarate dehydratase 1 from Streptomyces coelicolor (strain ATCC BAA-471 / A3(2) / M145).